We begin with the raw amino-acid sequence, 349 residues long: MARGRKMCKPRAVEAAAAAVAATAPGPEMVEQRGPGRPRSDGENVFAGQSKIYAYMSPNKCSAMRSPLQEENSVAHHEVKCPGKPLAGIYRKREEKRNTGNVIRSAVKSDEQKSKDTRRGPLAPFPNQKSEAAEPPKTPPPSCDSTNVAVAKQALKKSLKGKQAPRKKSQGKTQQNRKLTDFYPVRRSSRKSKAELQSEERKKNELIESGKEEGMKIDLIDGKGRGVIATKQFSRGDFVVEYHGDLIEITDAKKREALYVQDPSTGCYMYYFQYLSKTYCVDATQETNRLGRLINHSKCGNCQTKLHDIDGVPHLILIASRDIAAGEELLYDYGDRSKASIEAYPWLKH.

A disordered region spans residues 18-46 (AAVAATAPGPEMVEQRGPGRPRSDGENVF). Position 57 is a phosphoserine (Ser57). Residues 65–207 (RSPLQEENSV…SEERKKNELI (143 aa)) form a disordered region. A compositionally biased stretch (basic and acidic residues) spans 107–119 (VKSDEQKSKDTRR). The residue at position 138 (Thr138) is a Phosphothreonine. The span at 154–170 (ALKKSLKGKQAPRKKSQ) shows a compositional bias: basic residues. Over residues 192 to 207 (SKAELQSEERKKNELI) the composition is skewed to basic and acidic residues. An SET domain is found at 213-334 (EGMKIDLIDG…AGEELLYDYG (122 aa)). S-adenosyl-L-methionine contacts are provided by residues 223 to 225 (KGR), Tyr268, and 295 to 296 (NH).

The protein belongs to the class V-like SAM-binding methyltransferase superfamily. Histone-lysine methyltransferase family. PR/SET subfamily. In terms of assembly, interacts with L3MBTL1. Interacts with SIRT2 (phosphorylated form); the interaction is direct, stimulates KMT5A-mediated methyltransferase activity at histone H4 'Lys-20' (H4K20me1) and is increased in a H(2)O(2)-induced oxidative stress-dependent manner. Ubiquitinated and degraded by the DCX(DTL) complex.

The protein localises to the nucleus. It is found in the chromosome. It carries out the reaction L-lysyl(20)-[histone H4] + S-adenosyl-L-methionine = N(6)-methyl-L-lysyl(20)-[histone H4] + S-adenosyl-L-homocysteine + H(+). The catalysed reaction is L-lysyl-[protein] + S-adenosyl-L-methionine = N(6)-methyl-L-lysyl-[protein] + S-adenosyl-L-homocysteine + H(+). Functionally, protein-lysine N-methyltransferase that monomethylates both histones and non-histone proteins. Specifically monomethylates 'Lys-20' of histone H4 (H4K20me1). H4K20me1 is enriched during mitosis and represents a specific tag for epigenetic transcriptional repression. Mainly functions in euchromatin regions, thereby playing a central role in the silencing of euchromatic genes. Required for cell proliferation, probably by contributing to the maintenance of proper higher-order structure of DNA during mitosis. Involved in chromosome condensation and proper cytokinesis. Nucleosomes are preferred as substrate compared to free histones. Mediates monomethylation of p53/TP53 at 'Lys-382', leading to repress p53/TP53-target genes. Plays a negative role in TGF-beta response regulation and a positive role in cell migration. In Mus musculus (Mouse), this protein is N-lysine methyltransferase KMT5A.